The sequence spans 447 residues: GTPase Der (447 aa).

EngA-type G domains are found at residues 4–165 and 180–357; these read QIIA…PKEK and VQIV…KNWN. Residues 10–17, 57–61, 119–122, 186–193, 233–237, and 298–301 each bind GTP; these read GRPNVGKS, DTPGL, NKCE, GRPNAGKS, DTAGL, and NKWD. The region spanning 358–443 is the KH-like domain; that stretch reads KKITTSKLNE…PIRFAYVKTK (86 aa).

The protein belongs to the TRAFAC class TrmE-Era-EngA-EngB-Septin-like GTPase superfamily. EngA (Der) GTPase family. Associates with the 50S ribosomal subunit.

GTPase that plays an essential role in the late steps of ribosome biogenesis. The sequence is that of GTPase Der from Rickettsia canadensis (strain McKiel).